The primary structure comprises 105 residues: MYVIVEINGQQFKAEQGKKLFVHHIQNAESGAVVEFDKVLLVDNNGEVTVGVPTVEGAKVVCEVLSPLVKGDKVLVFHKKRRKGYRKLNGHRQQFTEVSIKEVIA.

The protein belongs to the bacterial ribosomal protein bL21 family. In terms of assembly, part of the 50S ribosomal subunit. Contacts protein L20.

Functionally, this protein binds to 23S rRNA in the presence of protein L20. The chain is Large ribosomal subunit protein bL21 from Parabacteroides distasonis (strain ATCC 8503 / DSM 20701 / CIP 104284 / JCM 5825 / NCTC 11152).